The chain runs to 312 residues: uncharacterized protein (312 aa).

2 stretches are compositionally biased toward basic and acidic residues: residues 1–17 and 28–39; these read MAKYDHLELVRLPEQLE and PDRDGPRHSAKL. Residues 1–39 form a disordered region; the sequence is MAKYDHLELVRLPEQLERRKHGGGSPPPDRDGPRHSAKL.

This is an uncharacterized protein from Sinorhizobium fredii (strain NBRC 101917 / NGR234).